A 241-amino-acid chain; its full sequence is Uridylate kinase (241 aa).

An ATP-binding site is contributed by 14–17 (KLSG). The interval 22–27 (GGLGMG) is involved in allosteric activation by GTP. Gly-56 contacts UMP. Residues Gly-57 and Arg-61 each contribute to the ATP site. Residues Asp-77 and 138–145 (TGNPFFTT) each bind UMP. The ATP site is built by Thr-165, Tyr-171, and Asp-174.

This sequence belongs to the UMP kinase family. As to quaternary structure, homohexamer.

Its subcellular location is the cytoplasm. The enzyme catalyses UMP + ATP = UDP + ADP. The protein operates within pyrimidine metabolism; CTP biosynthesis via de novo pathway; UDP from UMP (UMPK route): step 1/1. With respect to regulation, allosterically activated by GTP. Inhibited by UTP. In terms of biological role, catalyzes the reversible phosphorylation of UMP to UDP. This is Uridylate kinase from Psychrobacter sp. (strain PRwf-1).